The chain runs to 445 residues: ATP synthase subunit b-delta (445 aa).

The ATP synthase subunit b stretch occupies residues 1–168 (MSTFIGQLVG…PAAAEVERPV (168 aa)). The chain crosses the membrane as a helical span at residues 4-24 (FIGQLVGFAAIVFLVWRYVVP). The interval 169–445 (AAKMRSASRR…LTAAEAQLPD (277 aa)) is ATP synthase subunit delta.

It in the N-terminal section; belongs to the ATPase B chain family. The protein in the C-terminal section; belongs to the ATPase delta chain family. F-type ATPases have 2 components, F(1) - the catalytic core - and F(0) - the membrane proton channel. F(1) has five subunits: alpha(3), beta(3), gamma(1), delta(1), epsilon(1). F(0) has three main subunits: a(1), b(2) and c(10-14). The alpha and beta chains form an alternating ring which encloses part of the gamma chain. F(1) is attached to F(0) by a central stalk formed by the gamma and epsilon chains, while a peripheral stalk is formed by the delta and b chains.

The protein localises to the cell membrane. Its function is as follows. F(1)F(0) ATP synthase produces ATP from ADP in the presence of a proton or sodium gradient. F-type ATPases consist of two structural domains, F(1) containing the extramembraneous catalytic core and F(0) containing the membrane proton channel, linked together by a central stalk and a peripheral stalk. During catalysis, ATP synthesis in the catalytic domain of F(1) is coupled via a rotary mechanism of the central stalk subunits to proton translocation. Functionally, this fusion protein includes a component of the F(0) channel (subunit b) and of the F(1) subunit (subunit delta). Two copies of subunit b and one of delta together form the peripheral 'stator' stalk which links F(1) to F(0). The protein is ATP synthase subunit b-delta (atpFH) of Mycobacterium ulcerans (strain Agy99).